A 101-amino-acid chain; its full sequence is MVKSEMKLVIFSLFLLLIGVESLKNGYPVIEGGGSPDYGESAECGSEDSNSADNFCNDICTNVGGKSGDCCLGSCFCFDLPDEQKTVEVMDRTKEYCEFVE.

The signal sequence occupies residues 1–20; that stretch reads MVKSEMKLVIFSLFLLLIGV. In terms of domain architecture, LCN-type CS-alpha/beta spans 24–98; the sequence is KNGYPVIEGG…VMDRTKEYCE (75 aa). Intrachain disulfides connect Cys-44–Cys-70, Cys-56–Cys-75, Cys-60–Cys-77, and Cys-71–Cys-97.

Belongs to the long (4 C-C) scorpion toxin superfamily. Sodium channel inhibitor family. Beta subfamily. As to expression, expressed by the venom gland.

The protein resides in the secreted. In terms of biological role, excitatory insect beta-toxins induce a spastic paralysis. They bind voltage-independently at site-4 of sodium channels (Nav) and shift the voltage of activation toward more negative potentials thereby affecting sodium channel activation and promoting spontaneous and repetitive firing. The chain is Toxin Tpa8 from Tityus pachyurus (Colombian scorpion).